A 1122-amino-acid chain; its full sequence is AP-4 complex subunit epsilon-1 (1122 aa).

Residue Ser-699 is modified to Phosphoserine. 2 stretches are compositionally biased toward basic and acidic residues: residues 714–728 and 745–760; these read YLPKKESGTGDKPEA and TTRKDQAQGHIPSTEE. Disordered regions lie at residues 714–760 and 797–861; these read YLPK…STEE and SKLK…AEKL. An interaction with TEPSIN region spans residues 726–1122; it reads PEASHVPAEG…CHCQKVMQTS (397 aa). Residues 841–853 are compositionally biased toward low complexity; sequence ELSSELFRSESLS. Position 851 is a phosphoserine (Ser-851).

This sequence belongs to the adaptor complexes large subunit family. As to quaternary structure, adaptor protein complex 4 (AP-4) is a heterotetramer composed of two large adaptins (epsilon-type subunit AP4E1 and beta-type subunit AP4B1), a medium adaptin (mu-type subunit AP4M1) and a small adaptin (sigma-type AP4S1). Interacts with TEPSIN. Interacts with GRIA2; probably indirect it mediates the somatodendritic localization of GRIA2 in neurons.

It localises to the golgi apparatus. Its subcellular location is the trans-Golgi network membrane. Its function is as follows. Component of the adaptor protein complex 4 (AP-4). Adaptor protein complexes are vesicle coat components involved both in vesicle formation and cargo selection. They control the vesicular transport of proteins in different trafficking pathways. AP-4 forms a non clathrin-associated coat on vesicles departing the trans-Golgi network (TGN) and may be involved in the targeting of proteins from the trans-Golgi network (TGN) to the endosomal-lysosomal system. It is also involved in protein sorting to the basolateral membrane in epithelial cells and the proper asymmetric localization of somatodendritic proteins in neurons. AP-4 is involved in the recognition and binding of tyrosine-based sorting signals found in the cytoplasmic part of cargos, but may also recognize other types of sorting signal. This chain is AP-4 complex subunit epsilon-1, found in Mus musculus (Mouse).